We begin with the raw amino-acid sequence, 178 residues long: Ribosome maturation factor RimP (178 aa).

The protein belongs to the RimP family.

It localises to the cytoplasm. In terms of biological role, required for maturation of 30S ribosomal subunits. This Streptococcus pyogenes serotype M18 (strain MGAS8232) protein is Ribosome maturation factor RimP.